The primary structure comprises 79 residues: Large ribosomal subunit protein uL29 (79 aa).

It belongs to the universal ribosomal protein uL29 family.

The sequence is that of Large ribosomal subunit protein uL29 from Nocardia farcinica (strain IFM 10152).